A 929-amino-acid polypeptide reads, in one-letter code: Lon protease homolog 2, peroxisomal (929 aa).

Residues 11–257 (LPLVPLPKGS…RVVEILTRQL (247 aa)) form the Lon N-terminal domain. The tract at residues 302-325 (GLTPPGLSAGRNNDNDDKESNEVD) is disordered. 484–491 (GPPGVGKT) is a binding site for ATP. Residues 727-914 (HGRPGVVTGL…WEAIRQVWPD (188 aa)) form the Lon proteolytic domain. Residues S820 and K863 contribute to the active site. The short motif at 927 to 929 (SRL) is the Microbody targeting signal element.

It belongs to the peptidase S16 family.

The protein localises to the peroxisome matrix. It carries out the reaction Hydrolysis of proteins in presence of ATP.. Functionally, ATP-dependent serine protease that mediates the selective degradation of misfolded and unassembled polypeptides in the peroxisomal matrix. Necessary for type 2 peroxisome targeting signal (PTS2)-containing protein processing and facilitates peroxisome matrix protein import. The polypeptide is Lon protease homolog 2, peroxisomal (Aspergillus niger (strain ATCC MYA-4892 / CBS 513.88 / FGSC A1513)).